A 78-amino-acid chain; its full sequence is Sec-independent protein translocase protein TatA (78 aa).

Residues 1-21 (MGMPSMPELLIILLIVVLLFG) traverse the membrane as a helical segment. Residues 46 to 78 (DEEEVATENKKEIEEKTTASTTKTTADQDTTKA) form a disordered region. A compositionally biased stretch (basic and acidic residues) spans 52-62 (TENKKEIEEKT). Residues 63–78 (TASTTKTTADQDTTKA) show a composition bias toward low complexity.

It belongs to the TatA/E family. The Tat system comprises two distinct complexes: a TatABC complex, containing multiple copies of TatA, TatB and TatC subunits, and a separate TatA complex, containing only TatA subunits. Substrates initially bind to the TatABC complex, which probably triggers association of the separate TatA complex to form the active translocon.

The protein resides in the cell inner membrane. In terms of biological role, part of the twin-arginine translocation (Tat) system that transports large folded proteins containing a characteristic twin-arginine motif in their signal peptide across membranes. TatA could form the protein-conducting channel of the Tat system. In Nitratiruptor sp. (strain SB155-2), this protein is Sec-independent protein translocase protein TatA.